The sequence spans 333 residues: uncharacterized protein (333 aa).

A signal peptide spans 1–16; it reads MRPFLMILSVTYIASA. Asn204 carries N-linked (GlcNAc...) asparagine glycosylation.

This is an uncharacterized protein from Encephalitozoon cuniculi (strain GB-M1) (Microsporidian parasite).